Reading from the N-terminus, the 592-residue chain is Prospero homeobox protein 2 (592 aa).

Disordered regions lie at residues 20–56 (EACTEGERSSSPPELDRDSPFPWSQVPSSSPTDPEWF), 85–129 (GNAQ…RKGG), 155–218 (KPRD…LPSG), 308–336 (RLDSPRYPIPPRMTPKPCQDPPANFPLTA), and 353–382 (RYNNGHWSSSPPQDSSSQRHPSSEPALRPW). Over residues 95–106 (CPKKARERKRKQ) the composition is skewed to basic residues. Residues 201-211 (SGAEKHQESEK) are compositionally biased toward basic and acidic residues. The span at 314–331 (YPIPPRMTPKPCQDPPAN) shows a compositional bias: pro residues. Residues 360 to 377 (SSSPPQDSSSQRHPSSEP) are compositionally biased toward low complexity. The 59-residue stretch at 437–495 (QEGLNPGHLKKAKLMFFFTRYPSSNLLKVYFPDVQFNRCITSQMIKWFSNFREFYYIQM) folds into the Prospero-type homeo domain. The segment at 437-592 (QEGLNPGHLK…EIFKSSSYPQ (156 aa)) is homeo-Prospero. In terms of domain architecture, Prospero spans 496-592 (EKSARQAISD…EIFKSSSYPQ (97 aa)).

It belongs to the Prospero homeodomain family.

The protein localises to the nucleus. Its function is as follows. Transcription regulator. Does not seem to be essential for embryonic development and postnatal survival. The protein is Prospero homeobox protein 2 (PROX2) of Homo sapiens (Human).